Reading from the N-terminus, the 524-residue chain is Nedd8-activating enzyme E1 regulatory subunit (524 aa).

The protein belongs to the ubiquitin-activating E1 family. ULA1 subfamily. In terms of assembly, heterodimer of Uba3 and APP-BP1. The complex binds Nedd8 and UbcE2M. Interacts with Appl (via the intracellular domain, ICD).

The protein operates within protein modification; protein neddylation. Its function is as follows. Regulatory subunit of the dimeric Uba3-APP-BP1 E1 enzyme. E1 activates Nedd8 by first adenylating its C-terminal glycine residue with ATP, thereafter linking this residue to the side chain of the catalytic cysteine, yielding a Nedd8-Uba3 thioester and free AMP. E1 finally transfers Nedd8 to the catalytic cysteine of UbcE2M. Required for Cul1 and Cul3 neddylation. Appl and APP-BP1 interact antagonistically during development. The protein is Nedd8-activating enzyme E1 regulatory subunit (APP-BP1) of Drosophila melanogaster (Fruit fly).